The following is a 197-amino-acid chain: NADH-quinone oxidoreductase subunit C (197 aa).

It belongs to the complex I 30 kDa subunit family. NDH-1 is composed of 14 different subunits. Subunits NuoB, C, D, E, F, and G constitute the peripheral sector of the complex.

It localises to the cell inner membrane. The enzyme catalyses a quinone + NADH + 5 H(+)(in) = a quinol + NAD(+) + 4 H(+)(out). Its function is as follows. NDH-1 shuttles electrons from NADH, via FMN and iron-sulfur (Fe-S) centers, to quinones in the respiratory chain. The immediate electron acceptor for the enzyme in this species is believed to be ubiquinone. Couples the redox reaction to proton translocation (for every two electrons transferred, four hydrogen ions are translocated across the cytoplasmic membrane), and thus conserves the redox energy in a proton gradient. This chain is NADH-quinone oxidoreductase subunit C, found in Rickettsia typhi (strain ATCC VR-144 / Wilmington).